We begin with the raw amino-acid sequence, 475 residues long: Bifunctional protein HldE (475 aa).

The tract at residues 1–318 (MMQYSPKFNN…ENAIHHREET (318 aa)) is ribokinase. Residue 195–198 (NMSE) coordinates ATP. Asp-264 is an active-site residue. Positions 344-475 (MTNGCFDILH…NVIKKIQASK (132 aa)) are cytidylyltransferase.

It in the N-terminal section; belongs to the carbohydrate kinase PfkB family. In the C-terminal section; belongs to the cytidylyltransferase family. As to quaternary structure, homodimer.

It catalyses the reaction D-glycero-beta-D-manno-heptose 7-phosphate + ATP = D-glycero-beta-D-manno-heptose 1,7-bisphosphate + ADP + H(+). The enzyme catalyses D-glycero-beta-D-manno-heptose 1-phosphate + ATP + H(+) = ADP-D-glycero-beta-D-manno-heptose + diphosphate. The protein operates within nucleotide-sugar biosynthesis; ADP-L-glycero-beta-D-manno-heptose biosynthesis; ADP-L-glycero-beta-D-manno-heptose from D-glycero-beta-D-manno-heptose 7-phosphate: step 1/4. It functions in the pathway nucleotide-sugar biosynthesis; ADP-L-glycero-beta-D-manno-heptose biosynthesis; ADP-L-glycero-beta-D-manno-heptose from D-glycero-beta-D-manno-heptose 7-phosphate: step 3/4. Functionally, catalyzes the phosphorylation of D-glycero-D-manno-heptose 7-phosphate at the C-1 position to selectively form D-glycero-beta-D-manno-heptose-1,7-bisphosphate. Its function is as follows. Catalyzes the ADP transfer from ATP to D-glycero-beta-D-manno-heptose 1-phosphate, yielding ADP-D-glycero-beta-D-manno-heptose. The chain is Bifunctional protein HldE from Actinobacillus pleuropneumoniae serotype 5b (strain L20).